Consider the following 406-residue polypeptide: Cysteine desulfurase (406 aa).

Lys226 carries the N6-(pyridoxal phosphate)lysine modification. The active-site Cysteine persulfide intermediate is the Cys364.

The protein belongs to the class-V pyridoxal-phosphate-dependent aminotransferase family. Csd subfamily. In terms of assembly, homodimer. Interacts with SufE and the SufBCD complex composed of SufB, SufC and SufD. The interaction with SufE is required to mediate the direct transfer of the sulfur atom from the S-sulfanylcysteine. Pyridoxal 5'-phosphate serves as cofactor.

It localises to the cytoplasm. It carries out the reaction (sulfur carrier)-H + L-cysteine = (sulfur carrier)-SH + L-alanine. The enzyme catalyses L-selenocysteine + AH2 = hydrogenselenide + L-alanine + A + H(+). Its pathway is cofactor biosynthesis; iron-sulfur cluster biosynthesis. Cysteine desulfurases mobilize the sulfur from L-cysteine to yield L-alanine, an essential step in sulfur metabolism for biosynthesis of a variety of sulfur-containing biomolecules. Component of the suf operon, which is activated and required under specific conditions such as oxidative stress and iron limitation. Acts as a potent selenocysteine lyase in vitro, that mobilizes selenium from L-selenocysteine. Selenocysteine lyase activity is however unsure in vivo. In Escherichia coli O7:K1 (strain IAI39 / ExPEC), this protein is Cysteine desulfurase.